Consider the following 626-residue polypeptide: Probable potassium transport system protein Kup (626 aa).

13 helical membrane-spanning segments follow: residues Val8–Ser28, Ile44–Ile64, Ile102–Thr122, Pro139–Val159, Phe171–Ile191, Ile196–Ala216, Phe217–Met237, Trp249–Leu269, Leu281–Ile301, Ile339–Phe359, Met377–Trp397, Val399–Leu419, and Ile421–Thr441.

The protein belongs to the HAK/KUP transporter (TC 2.A.72) family.

Its subcellular location is the cell inner membrane. The enzyme catalyses K(+)(in) + H(+)(in) = K(+)(out) + H(+)(out). Functionally, transport of potassium into the cell. Likely operates as a K(+):H(+) symporter. The chain is Probable potassium transport system protein Kup from Acinetobacter baylyi (strain ATCC 33305 / BD413 / ADP1).